Here is an 88-residue protein sequence, read N- to C-terminus: Beta-insect excitatory toxin LqhIT1b (88 aa).

An N-terminal signal peptide occupies residues 1–18 (MKFFLLFLVVLPIMGVLG). Residues 20–83 (KNGYAVDSKG…ISDTTKKYCD (64 aa)) enclose the LCN-type CS-alpha/beta domain. Disulfide bonds link Cys-34-Cys-55, Cys-40-Cys-60, Cys-44-Cys-62, and Cys-56-Cys-82.

The protein belongs to the long (4 C-C) scorpion toxin superfamily. Sodium channel inhibitor family. Beta subfamily. Expressed by the venom gland.

The protein localises to the secreted. Excitatory insect toxins induce a spastic paralysis. They bind voltage-independently at site-4 of sodium channels (Nav) and shift the voltage of activation toward more negative potentials thereby affecting sodium channel activation and promoting spontaneous and repetitive firing. The sequence is that of Beta-insect excitatory toxin LqhIT1b from Leiurus hebraeus (Hebrew deathstalker scorpion).